The following is a 448-amino-acid chain: Damage-control phosphatase ARMT1 (448 aa).

Positions 257 and 258 each coordinate Mn(2+). Residue 257–258 participates in substrate binding; sequence DN. S-adenosyl-L-methionine contacts are provided by Glu262 and Asp295. Asp295 contacts Mn(2+). Substrate contacts are provided by residues 371 to 375 and Lys408; that span reads DLNYR. The Subfamily III RTxK motif motif lies at 405-408; sequence RTLK.

The protein belongs to the damage-control phosphatase family. Sugar phosphate phosphatase III subfamily. It depends on Mn(2+) as a cofactor. Ni(2+) is required as a cofactor. Post-translationally, automethylated.

It catalyses the reaction beta-D-fructose 1-phosphate + H2O = D-fructose + phosphate. It carries out the reaction beta-D-fructose 6-phosphate = dihydroxyacetone + D-glyceraldehyde 3-phosphate. The enzyme catalyses L-glutamyl-[protein] + S-adenosyl-L-methionine = [protein]-L-glutamate 5-O-methyl ester + S-adenosyl-L-homocysteine. In terms of biological role, metal-dependent phosphatase that shows phosphatase activity against several substrates, including fructose-1-phosphate and fructose-6-phosphate. Its preference for fructose-1-phosphate, a strong glycating agent that causes DNA damage rather than a canonical yeast metabolite, suggests a damage-control function in hexose phosphate metabolism. Has also been shown to have O-methyltransferase activity that methylates glutamate residues of target proteins to form gamma-glutamyl methyl ester residues. Possibly methylates PCNA, suggesting it is involved in the DNA damage response. This chain is Damage-control phosphatase ARMT1, found in Danio rerio (Zebrafish).